Consider the following 261-residue polypeptide: CD40 ligand (261 aa).

Residues 1-22 lie on the Cytoplasmic side of the membrane; the sequence is MIETYNQPSPRSAATGLPVRMK. The chain crosses the membrane as a helical; Signal-anchor for type II membrane protein span at residues 23 to 43; it reads IFMYLLTIFLITQMIGSALFA. At 44-261 the chain is on the extracellular side; it reads VYLHRRLDKI…GFTSFGLLKL (218 aa). The THD domain maps to 122–261; it reads IAAHVISEAS…GFTSFGLLKL (140 aa). An intrachain disulfide couples Cys-178 to Cys-218. Asn-240 carries N-linked (GlcNAc...) asparagine glycosylation.

Belongs to the tumor necrosis factor family. As to quaternary structure, homotrimer. Interacts with CD28. CD40 ligand, soluble form: Exists as either a monomer or a homotrimer. Forms a ternary complex between CD40 and integrins for CD40-CD40LG signaling. In terms of processing, the soluble form derives from the membrane form by proteolytic processing.

The protein localises to the cell membrane. It is found in the cell surface. The protein resides in the secreted. Functionally, cytokine that acts as a ligand to CD40/TNFRSF5. Costimulates T-cell proliferation and cytokine production. Its cross-linking on T-cells generates a costimulatory signal which enhances the production of IL4 and IL10 in conjunction with the TCR/CD3 ligation and CD28 costimulation. Induces the activation of NF-kappa-B. Induces the activation of kinases MAPK8 and PAK2 in T-cells. Mediates B-cell proliferation in the absence of co-stimulus as well as IgE production in the presence of IL4. Involved in immunoglobulin class switching. In terms of biological role, acts as a ligand for integrins, specifically ITGA5:ITGB1 and ITGAV:ITGB3; both integrins and the CD40 receptor are required for activation of CD40-CD40LG signaling, which have cell-type dependent effects, such as B-cell activation, NF-kappa-B signaling and anti-apoptotic signaling. This is CD40 ligand (CD40LG) from Cercocebus atys (Sooty mangabey).